The following is a 660-amino-acid chain: Putative ATP-dependent RNA helicase Pl10 (660 aa).

The segment covering 1–11 (MSHVAEEDELG) has biased composition (acidic residues). The segment at 1–117 (MSHVAEEDEL…SRGGRSGFGK (117 aa)) is disordered. The residue at position 2 (Ser-2) is an N-acetylserine. The span at 12-21 (LDQQLAGLDL) shows a compositional bias: low complexity. A compositionally biased stretch (polar residues) spans 24–34 (RDSQSGGSTAS). Over residues 44–66 (RNREAAKAFYDKDGSRWSKDKDA) the composition is skewed to basic and acidic residues. The residue at position 55 (Lys-55) is an N6-acetyllysine. A phosphoserine mark is found at Ser-80, Ser-84, and Ser-89. Basic and acidic residues predominate over residues 93–103 (GRFDERGRSDY). Arg-100 bears the Omega-N-methylarginine mark. At Ser-101 the chain carries Phosphoserine. Tyr-103 carries the phosphotyrosine modification. Position 109 is an omega-N-methylarginine (Arg-109). Residue Lys-117 is modified to N6-acetyllysine. The Q motif motif lies at 179-207 (ESFSDVEMGEIIMGNIELTRYTRPTPVQK). Ser-182 is modified (phosphoserine). 199 to 206 (YTRPTPVQ) lines the ATP pocket. The Helicase ATP-binding domain occupies 210–402 (IPIIKEKRDL…RDFLDEYIFL (193 aa)). Residue Lys-214 forms a Glycyl lysine isopeptide (Lys-Gly) (interchain with G-Cter in SUMO2) linkage. 223–230 (AQTGSGKT) serves as a coordination point for ATP. The DEAD box motif lies at 346 to 349 (DEAD). Residues 413 to 574 (NITQKVVWVE…EVPSWLENMA (162 aa)) enclose the Helicase C-terminal domain. Ser-455 is subject to Phosphoserine. Arg-590 carries the omega-N-methylarginine modification. Phosphoserine is present on residues Ser-592, Ser-603, and Ser-610. The tract at residues 598–632 (RDYRQSSGASSSSFSSGRASNSRSGGGSHGSSRGF) is disordered. The segment covering 602 to 620 (QSSGASSSSFSSGRASNSR) has biased composition (low complexity). Arg-615 and Arg-630 each carry omega-N-methylarginine. Over residues 621–632 (SGGGSHGSSRGF) the composition is skewed to gly residues.

The protein belongs to the DEAD box helicase family. DDX3/DED1 subfamily. As to expression, testis.

The catalysed reaction is ATP + H2O = ADP + phosphate + H(+). Functionally, putative ATP-dependent RNA helicase. Possible role in a key step of the spermatogenic process. This is Putative ATP-dependent RNA helicase Pl10 (D1Pas1) from Mus musculus (Mouse).